A 239-amino-acid chain; its full sequence is MVIKAQSPAGFAEEYIIESIWNNRFPPGSILPAERELSELIGVTRTTLREVLQRLARDGWLTIQHGKPTKVNNFWETSGLNILETLARLDHDSVPQLIDNLLSVRTNISTIFIRTAFRQHPDKALAVLDSAREVEDHADAFADLDYNIFRGLAFASGNPIYGLILNGMKGLYTRIGRHYFSSPEARSLALGFYHQLAKVCEGGLHDQVYELVRRYGHDSGEIWHRMQKSLPGDLAMNMR.

Residues 6–74 (QSPAGFAEEY…HGKPTKVNNF (69 aa)) form the HTH gntR-type domain. A DNA-binding region (H-T-H motif) is located at residues 34-53 (ERELSELIGVTRTTLREVLQ).

As to quaternary structure, homodimer.

The protein localises to the cytoplasm. In terms of biological role, multifunctional regulator of fatty acid metabolism. This Klebsiella pneumoniae (strain 342) protein is Fatty acid metabolism regulator protein.